We begin with the raw amino-acid sequence, 370 residues long: tRNA 2-selenouridine synthase (370 aa).

A Rhodanese domain is found at 12–136 (FLDDVPMMDM…MRTFLLETTQ (125 aa)). The active-site S-selanylcysteine intermediate is the cysteine 95.

Belongs to the SelU family. As to quaternary structure, monomer.

The catalysed reaction is 5-methylaminomethyl-2-thiouridine(34) in tRNA + selenophosphate + (2E)-geranyl diphosphate + H2O + H(+) = 5-methylaminomethyl-2-selenouridine(34) in tRNA + (2E)-thiogeraniol + phosphate + diphosphate. The enzyme catalyses 5-methylaminomethyl-2-thiouridine(34) in tRNA + (2E)-geranyl diphosphate = 5-methylaminomethyl-S-(2E)-geranyl-thiouridine(34) in tRNA + diphosphate. It catalyses the reaction 5-methylaminomethyl-S-(2E)-geranyl-thiouridine(34) in tRNA + selenophosphate + H(+) = 5-methylaminomethyl-2-(Se-phospho)selenouridine(34) in tRNA + (2E)-thiogeraniol. It carries out the reaction 5-methylaminomethyl-2-(Se-phospho)selenouridine(34) in tRNA + H2O = 5-methylaminomethyl-2-selenouridine(34) in tRNA + phosphate. In terms of biological role, involved in the post-transcriptional modification of the uridine at the wobble position (U34) of tRNA(Lys), tRNA(Glu) and tRNA(Gln). Catalyzes the conversion of 2-thiouridine (S2U-RNA) to 2-selenouridine (Se2U-RNA). Acts in a two-step process involving geranylation of 2-thiouridine (S2U) to S-geranyl-2-thiouridine (geS2U) and subsequent selenation of the latter derivative to 2-selenouridine (Se2U) in the tRNA chain. The sequence is that of tRNA 2-selenouridine synthase from Pseudomonas putida (strain ATCC 47054 / DSM 6125 / CFBP 8728 / NCIMB 11950 / KT2440).